Consider the following 102-residue polypeptide: Small ribosomal subunit protein uS10 (102 aa).

This sequence belongs to the universal ribosomal protein uS10 family. As to quaternary structure, part of the 30S ribosomal subunit.

Functionally, involved in the binding of tRNA to the ribosomes. The sequence is that of Small ribosomal subunit protein uS10 from Phenylobacterium zucineum (strain HLK1).